A 276-amino-acid polypeptide reads, in one-letter code: Vitamin B12-binding protein (276 aa).

Positions 1-20 are cleaved as a signal peptide; it reads MLVIRLIACTFLFITPSLLA. The Fe/B12 periplasmic-binding domain maps to 27 to 274; it reads RIISLAPHAT…QVCTYLKIAQ (248 aa). Tyr54 lines the cyanocob(III)alamin pocket. A disulfide bridge links Cys187 with Cys267.

It belongs to the BtuF family. As to quaternary structure, the complex is composed of two ATP-binding proteins (BtuD), two transmembrane proteins (BtuC) and a solute-binding protein (BtuF).

It localises to the periplasm. Functionally, part of the ABC transporter complex BtuCDF involved in vitamin B12 import. Binds vitamin B12 and delivers it to the periplasmic surface of BtuC. The polypeptide is Vitamin B12-binding protein (Vibrio cholerae serotype O1 (strain ATCC 39541 / Classical Ogawa 395 / O395)).